The chain runs to 153 residues: Ribosome maturation factor RimP (153 aa).

Belongs to the RimP family.

Its subcellular location is the cytoplasm. Its function is as follows. Required for maturation of 30S ribosomal subunits. The chain is Ribosome maturation factor RimP from Pelotomaculum thermopropionicum (strain DSM 13744 / JCM 10971 / SI).